The primary structure comprises 141 residues: Putative antiporter subunit mnhB2 (141 aa).

Helical transmembrane passes span 10–30 (TVTKLVVFILLTFGFYVFFAG), 35–55 (GGGFIGGLIFSSAFILMFLAF), 70–90 (ILMIIGALVSSITAIIPMFFG), and 114–134 (ITLFELGILFSVVGVIVTVML).

The protein belongs to the CPA3 antiporters (TC 2.A.63) subunit B family. As to quaternary structure, may form a heterooligomeric complex that consists of seven subunits: mnhA2, mnhB2, mnhC2, mnhD2, mnhE2, mnhF2 and mnhG2.

It is found in the cell membrane. In Staphylococcus aureus (strain Mu3 / ATCC 700698), this protein is Putative antiporter subunit mnhB2 (mnhB2).